A 58-amino-acid polypeptide reads, in one-letter code: DNA-directed RNA polymerases I, II, and III subunit RPABC4 (58 aa).

Zn(2+) contacts are provided by cysteine 19, cysteine 22, cysteine 36, and cysteine 39. Residues 19 to 39 (CGECHTENEIKSRDPIRCREC) form a C4-type zinc finger.

It belongs to the archaeal Rpo12/eukaryotic RPC10 RNA polymerase subunit family. In terms of assembly, component of the RNA polymerase I (Pol I), RNA polymerase II (Pol II) and RNA polymerase III (Pol III) complexes consisting of at least 13, 12 and 17 subunits, respectively. Pol I complex consists of a ten-subunit catalytic core composed of POLR1A/RPA1, POLR1B/RPA2, POLR1C/RPAC1, POLR1D/RPAC2, POLR1H/RPA12, POLR2E/RPABC1, POLR2F/RPABC2, POLR2H/RPABC3, POLR2K/RPABC4 and POLR2L/RPABC5; a mobile stalk subunit POLR1F/RPA43 protruding from the core and additional subunits homologous to general transcription factors POLR1E/RPA49 and POLR1G/RPA34. Part of Pol I pre-initiation complex (PIC), in which Pol I core assembles with RRN3 and promoter-bound UTBF and SL1/TIF-IB complex. Pol II complex contains a ten-subunit catalytic core composed of POLR2A/RPB1, POLR2B/RPB2, POLR2C/RPB3, POLR2I/RPB9, POLR2J/RPB11, POLR2E/RPABC1, POLR2F/RPABC2, POLR2H/RPABC3, POLR2K/RPABC4 and POLR2L/RPABC5 and a mobile stalk composed of two subunits POLR2D/RPB4 and POLR2G/RPB7. Part of Pol II(G) complex, in which Pol II core associates with an additional subunit POLR2M; unlike conventional Pol II, Pol II(G) functions as a transcriptional repressor. Part of TBP-based Pol II pre-initiation complex (PIC), in which Pol II core assembles with general transcription factors and other specific initiation factors including GTF2E1, GTF2E2, GTF2F1, GTF2F2, TCEA1, ERCC2, ERCC3, GTF2H2, GTF2H3, GTF2H4, GTF2H5, GTF2A1, GTF2A2, GTF2B and TBP; this large multi-subunit PIC complex mediates DNA unwinding and targets Pol II core to the transcription start site where the first phosphodiester bond forms. Pol III complex consists of a ten-subunit catalytic core composed of POLR3A/RPC1, POLR3B/RPC2, POLR1C/RPAC1, POLR1D/RPAC2, POLR3K/RPC10, POLR2E/RPABC1, POLR2F/RPABC2, POLR2H/RPABC3, POLR2K/RPABC4 and POLR2L/RPABC5; a mobile stalk composed of two subunits POLR3H/RPC8 and CRCP/RPC9, protruding from the core and functioning primarily in transcription initiation; and additional subunits homologous to general transcription factors of the RNA polymerase II machinery, POLR3C/RPC3-POLR3F/RPC6-POLR3G/RPC7 heterotrimer required for transcription initiation and POLR3D/RPC4-POLR3E/RPC5 heterodimer involved in both transcription initiation and termination.

It is found in the nucleus. Its subcellular location is the nucleolus. DNA-dependent RNA polymerase catalyzes the transcription of DNA into RNA using the four ribonucleoside triphosphates as substrates. Common component of RNA polymerases I, II and III which synthesize ribosomal RNA precursors, mRNA precursors and many functional non-coding RNAs, and a small RNAs, such as 5S rRNA and tRNAs, respectively. In Bos taurus (Bovine), this protein is DNA-directed RNA polymerases I, II, and III subunit RPABC4 (POLR2K).